Reading from the N-terminus, the 330-residue chain is Mas-related G-protein coupled receptor member X2 (330 aa).

The Extracellular segment spans residues 1-33; it reads MDPTTLVWGTESTTMNGNDQALPLLCGKETLIL. The chain crosses the membrane as a helical span at residues 34–54; sequence VVLILFIALVGLVGNAFVLWL. Residues 55–63 are Cytoplasmic-facing; the sequence is LGFRMRRNA. A helical transmembrane segment spans residues 64–84; it reads FSVYVLSLAGADFLFLCFPMI. Topologically, residues 85–96 are extracellular; that stretch reads NCLAYLINFFHS. A helical transmembrane segment spans residues 97 to 117; that stretch reads ISINFPSFFTTVMTCAYLAGL. Residues 118–144 are Cytoplasmic-facing; it reads SMLSAISTERCLSVLWPIWYRSRRPRH. A helical membrane pass occupies residues 145–165; the sequence is LSAVMCVLLWALSLLLSILEG. Residues 166-184 are Extracellular-facing; the sequence is KFCGFLFSDGDSGWCQTFD. Residues 185–205 traverse the membrane as a helical segment; sequence FITAAWLMFLFVVLCGSSLAL. Over 206–228 the chain is Cytoplasmic; sequence LVRILCGSRGLPLTRLYLTILLT. The chain crosses the membrane as a helical span at residues 229–249; the sequence is VLIFLLCGLPFGIQWFLILWI. At 250–264 the chain is on the extracellular side; it reads WKNSDVLFCHIHPVS. Residues 265 to 285 form a helical membrane-spanning segment; it reads VVLSSFNSSANPIIYFFVGSF. Topologically, residues 286–330 are cytoplasmic; it reads RKQWRLRQPVLKLALQRALQDTAEVDHSEGCFSQGTLEMSGSSLV.

Belongs to the G-protein coupled receptor 1 family. Mas subfamily.

Its subcellular location is the cell membrane. Functionally, mast cell-specific receptor for basic secretagogues, i.e. cationic amphiphilic drugs, as well as endo- or exogenous peptides, consisting of a basic head group and a hydrophobic core. Recognizes and binds small molecules containing a cyclized tetrahydroisoquinoline (THIQ), such as non-steroidal neuromuscular blocking drugs (NMBDs), including tubocurarine and atracurium. In response to these compounds, mediates pseudo-allergic reactions characterized by histamine release, inflammation and airway contraction. The protein is Mas-related G-protein coupled receptor member X2 (MRGPRX2) of Trachypithecus francoisi (Francois' leaf monkey).